Consider the following 371-residue polypeptide: F-box protein At2g41170 (371 aa).

The F-box domain maps to 56–102 (KMSLLDLPDLTLDCILEKLSPSELCAMTSVCSELRDKCVSDHLWEKH).

The polypeptide is F-box protein At2g41170 (Arabidopsis thaliana (Mouse-ear cress)).